The chain runs to 310 residues: Mycothiol acetyltransferase (310 aa).

2 N-acetyltransferase domains span residues 5–155 and 160–309; these read TTVE…HPAR and PPFR…LPAA. 80–82 serves as a coordination point for acetyl-CoA; that stretch reads LLV. 1D-myo-inositol 2-(L-cysteinylamino)-2-deoxy-alpha-D-glucopyranoside contacts are provided by D187, K226, and E238. 242-244 contributes to the acetyl-CoA binding site; that stretch reads IAT. Y276 provides a ligand contact to 1D-myo-inositol 2-(L-cysteinylamino)-2-deoxy-alpha-D-glucopyranoside. An acetyl-CoA-binding site is contributed by 281 to 286; that stretch reads NERALR.

Belongs to the acetyltransferase family. MshD subfamily. In terms of assembly, monomer.

The enzyme catalyses 1D-myo-inositol 2-(L-cysteinylamino)-2-deoxy-alpha-D-glucopyranoside + acetyl-CoA = mycothiol + CoA + H(+). Functionally, catalyzes the transfer of acetyl from acetyl-CoA to desacetylmycothiol (Cys-GlcN-Ins) to form mycothiol. The polypeptide is Mycothiol acetyltransferase (Acidimicrobium ferrooxidans (strain DSM 10331 / JCM 15462 / NBRC 103882 / ICP)).